Reading from the N-terminus, the 448-residue chain is MLKMTLKEVLESIKPKDEERKKVKLIMDELRGIAQEVIEESGEEIEVKFVGSLAKDTYLSGDHDIDMFLAFPLSIPVEKLKSKGLEIAESIGKRLESYEISYAEHPYVRGVYKGYQVDIVPCYNVRDWREVRTAVDRSILHTEWVLKNIKGKNDEVRLLKRFLKGINAYGSEVYRRGFSGYLAEILVIKFGSFLKVLEKADFMLRQKIIDPENWLKREPEIAMKTVKREIEEDKPIIVIDPVDPRRNVAANLSWERYGLFYFKAREFLTKPSTELFFPRDKKGNYLEVLRRKGTHLVTLTFEPPNLVDDIIIPQVERTAKGLARQLELEGFRVLGIDYGRDFIFLEVEEIERPRIKIKKGPLYFTHHGLRFFDKNDIVWIEGKELASEKSSLGFIVDVLEDILRKGQFSAGKNVKDAIVGANIIIDFVPKALAQEAYLFLSREKFRVK.

Positions 52 and 55 each coordinate ATP. Positions 52 and 55 each coordinate CTP. Mg(2+)-binding residues include Asp64, Asp66, and Asp118. Residues His141, Lys160, and Tyr169 each contribute to the ATP site. CTP is bound by residues His141, Lys160, and Tyr169.

The protein belongs to the tRNA nucleotidyltransferase/poly(A) polymerase family. Archaeal CCA-adding enzyme subfamily. Homodimer. Mg(2+) is required as a cofactor.

The catalysed reaction is a tRNA precursor + 2 CTP + ATP = a tRNA with a 3' CCA end + 3 diphosphate. It catalyses the reaction a tRNA with a 3' CCA end + 2 CTP + ATP = a tRNA with a 3' CCACCA end + 3 diphosphate. In terms of biological role, catalyzes the addition and repair of the essential 3'-terminal CCA sequence in tRNAs without using a nucleic acid template. Adds these three nucleotides in the order of C, C, and A to the tRNA nucleotide-73, using CTP and ATP as substrates and producing inorganic pyrophosphate. tRNA 3'-terminal CCA addition is required both for tRNA processing and repair. Also involved in tRNA surveillance by mediating tandem CCA addition to generate a CCACCA at the 3' terminus of unstable tRNAs. While stable tRNAs receive only 3'-terminal CCA, unstable tRNAs are marked with CCACCA and rapidly degraded. This Pyrococcus abyssi (strain GE5 / Orsay) protein is CCA-adding enzyme.